Consider the following 292-residue polypeptide: MIQGSIVAIVTPMHADGALDLPGLRKLIDWHIAEGTDGIVIVGTTGESPTVSVDEHCELIRVAVEHTAKRIPIIAGTGGNSTSEAIELTQFAKDVGADASLQVVPYYNRPTQEGMYQHFKKIVEAVDLPAILYNVPGRTVADMSNETILRLAQIPSVIGVKDATGNISRGIDLMRLRPKDFAVYSGDDATAMALMLCGANGNISVTANIAPRGMHQLCDAAINQRVAEAIAINNKLVPLHNKLFIEPNPVPLKWAMAEIGLIPSGMRLPIVPLAAEYHDIVRAAMRESGVLQ.

Thr-45 serves as a coordination point for pyruvate. Tyr-133 serves as the catalytic Proton donor/acceptor. The active-site Schiff-base intermediate with substrate is the Lys-161. Ile-203 is a binding site for pyruvate.

This sequence belongs to the DapA family. In terms of assembly, homotetramer; dimer of dimers.

It is found in the cytoplasm. The catalysed reaction is L-aspartate 4-semialdehyde + pyruvate = (2S,4S)-4-hydroxy-2,3,4,5-tetrahydrodipicolinate + H2O + H(+). It functions in the pathway amino-acid biosynthesis; L-lysine biosynthesis via DAP pathway; (S)-tetrahydrodipicolinate from L-aspartate: step 3/4. In terms of biological role, catalyzes the condensation of (S)-aspartate-beta-semialdehyde [(S)-ASA] and pyruvate to 4-hydroxy-tetrahydrodipicolinate (HTPA). This is 4-hydroxy-tetrahydrodipicolinate synthase from Herminiimonas arsenicoxydans.